The primary structure comprises 140 residues: 3-hydroxyacyl-[acyl-carrier-protein] dehydratase FabZ (140 aa).

H47 is a catalytic residue.

The protein belongs to the thioester dehydratase family. FabZ subfamily.

Its subcellular location is the cytoplasm. The catalysed reaction is a (3R)-hydroxyacyl-[ACP] = a (2E)-enoyl-[ACP] + H2O. In terms of biological role, involved in unsaturated fatty acids biosynthesis. Catalyzes the dehydration of short chain beta-hydroxyacyl-ACPs and long chain saturated and unsaturated beta-hydroxyacyl-ACPs. The sequence is that of 3-hydroxyacyl-[acyl-carrier-protein] dehydratase FabZ from Streptococcus pyogenes serotype M49 (strain NZ131).